The primary structure comprises 278 residues: HTH-type transcriptional activator RhaS (278 aa).

The HTH araC/xylS-type domain maps to 174 to 272; the sequence is NLLLAWLEDH…NWSPRDIRQG (99 aa). DNA-binding regions (H-T-H motif) lie at residues 191 to 212 and 239 to 262; these read DAVA…KQQT and VTDI…RREF.

Binds DNA as a dimer.

Its subcellular location is the cytoplasm. In terms of biological role, activates expression of the rhaBAD and rhaT operons. This is HTH-type transcriptional activator RhaS from Escherichia coli (strain SE11).